Here is a 273-residue protein sequence, read N- to C-terminus: MGSGWVPWVVALLVNLTRLDSSMTQGTDSPEDFVIQAKADCYFTNGTEKVQFVVRFIFNLEEYVRFDSDVGMFVALTKLGQPDAEQWNSRLDLLERSRQAVDGVCRHNYRLGAPFTVGRKVQPEVTVYPERTPLLHQHNLLHCSVTGFYPGDIKIKWFLNGQEERAGVMSTGPIRNGDWTFQTVVMLEMTPELGHVYTCLVDHSSLLSPVSVEWRAQSEYSWRKMLSGIAAFLLGLIFLLVGIVIQLRAQKGYVRTQMSGNEVSRAVLLPQSC.

The N-terminal stretch at 1 to 26 (MGSGWVPWVVALLVNLTRLDSSMTQG) is a signal peptide. A beta-1 region spans residues 27 to 120 (TDSPEDFVIQ…LGAPFTVGRK (94 aa)). Residues 27–224 (TDSPEDFVIQ…RAQSEYSWRK (198 aa)) lie on the Extracellular side of the membrane. Intrachain disulfides connect Cys41-Cys105 and Cys143-Cys199. A glycan (N-linked (GlcNAc...) asparagine) is linked at Asn45. A beta-2 region spans residues 121–214 (VQPEVTVYPE…SLLSPVSVEW (94 aa)). The 91-residue stretch at 123-213 (PEVTVYPERT…SSLLSPVSVE (91 aa)) folds into the Ig-like C1-type domain. The interval 215 to 224 (RAQSEYSWRK) is connecting peptide. The chain crosses the membrane as a helical span at residues 225–245 (MLSGIAAFLLGLIFLLVGIVI). The Cytoplasmic portion of the chain corresponds to 246-273 (QLRAQKGYVRTQMSGNEVSRAVLLPQSC).

This sequence belongs to the MHC class II family. Heterodimer of an alpha chain (DOA) and a beta chain (DOB). Forms a heterotetrameric complex with an HLA-DM molecule during intracellular transport in endosomal/lysosomal compartments in B-cells.

Its subcellular location is the endosome membrane. The protein resides in the lysosome membrane. In terms of biological role, important modulator in the HLA class II restricted antigen presentation pathway by interaction with the HLA-DM molecule in B-cells. Modifies peptide exchange activity of HLA-DM. This Homo sapiens (Human) protein is HLA class II histocompatibility antigen, DO beta chain (HLA-DOB).